The chain runs to 418 residues: Ankyrin repeat domain-containing protein 61 (418 aa).

8 ANK repeats span residues Ala-27–Ile-57, Glu-75–Val-104, Asn-132–Thr-161, Asn-167–Ala-196, Ala-200–Cys-229, Thr-234–Ala-273, Lys-277–Ile-306, and Asn-310–Met-343.

The sequence is that of Ankyrin repeat domain-containing protein 61 (ANKRD61) from Homo sapiens (Human).